Consider the following 354-residue polypeptide: Homeobox protein Nkx-2.4 (354 aa).

Residues 188-247 constitute a DNA-binding region (homeobox); it reads RRKRRVLFSQAQVYELERRFKQQKYLSAPEREHLASMIHLTPTQVKIWFQNHRYKMKRQA. Positions 245 to 329 are disordered; the sequence is RQAKDKAAQQ…PALHGPGGGL (85 aa). Residues 262 to 272 are compositionally biased toward pro residues; it reads GPPPPPPPPSP. Positions 290–304 are enriched in low complexity; that stretch reads GAGTPTPGQGGQQPQ.

It belongs to the NK-2 homeobox family. In terms of tissue distribution, in the embryo it is detected in the posterior hypothalamus and later in the head. In the adult it is detected only in testis.

It localises to the nucleus. Probable transcription factor. The chain is Homeobox protein Nkx-2.4 (Nkx2-4) from Mus musculus (Mouse).